The chain runs to 274 residues: Proteasome subunit beta type-5-A (274 aa).

A propeptide spans 1–57 (MKLDTSGFETSMPMIGFGSSSDMLDELSSVPSFDLPRTKEFDGFQKKAKDMLKHAKG) (removed in mature form). Thr58 serves as the catalytic Nucleophile.

Belongs to the peptidase T1B family. Component of the 20S core complex of the 26S proteasome. The 26S proteasome is composed of a core protease (CP), known as the 20S proteasome, capped at one or both ends by the 19S regulatory particle (RP/PA700). The 20S proteasome core is composed of 28 subunits that are arranged in four stacked rings, resulting in a barrel-shaped structure. The two end rings are each formed by seven alpha subunits, and the two central rings are each formed by seven beta subunits. The catalytic chamber with the active sites is on the inside of the barrel. Ubiquitous low levels, higher expression in siliques and flowers.

Its subcellular location is the cytoplasm. The protein resides in the nucleus. The enzyme catalyses Cleavage of peptide bonds with very broad specificity.. Its function is as follows. The proteasome is a multicatalytic proteinase complex which is characterized by its ability to cleave peptides with Arg, Phe, Tyr, Leu, and Glu adjacent to the leaving group at neutral or slightly basic pH. The proteasome has an ATP-dependent proteolytic activity. This is Proteasome subunit beta type-5-A (PBE1) from Arabidopsis thaliana (Mouse-ear cress).